The chain runs to 145 residues: 3-dehydroquinate dehydratase 1 (145 aa).

The Proton acceptor role is filled by Tyr-24. Substrate contacts are provided by Asn-75, His-81, and Asp-88. His-101 serves as the catalytic Proton donor. Residues 102–103 (IS) and Arg-112 each bind substrate.

Belongs to the type-II 3-dehydroquinase family. As to quaternary structure, homododecamer.

It catalyses the reaction 3-dehydroquinate = 3-dehydroshikimate + H2O. It participates in metabolic intermediate biosynthesis; chorismate biosynthesis; chorismate from D-erythrose 4-phosphate and phosphoenolpyruvate: step 3/7. In terms of biological role, catalyzes a trans-dehydration via an enolate intermediate. The sequence is that of 3-dehydroquinate dehydratase 1 (aroQ1) from Agrobacterium fabrum (strain C58 / ATCC 33970) (Agrobacterium tumefaciens (strain C58)).